The primary structure comprises 107 residues: SH3 domain-binding glutamic acid-rich-like protein 2 (107 aa).

The SH3-binding motif lies at 61–67 (QGNPLPP).

The protein belongs to the SH3BGR family.

The protein localises to the nucleus. The chain is SH3 domain-binding glutamic acid-rich-like protein 2 (SH3BGRL2) from Bos taurus (Bovine).